The chain runs to 83 residues: Small ribosomal subunit protein uS17 (83 aa).

Belongs to the universal ribosomal protein uS17 family. Part of the 30S ribosomal subunit.

One of the primary rRNA binding proteins, it binds specifically to the 5'-end of 16S ribosomal RNA. The sequence is that of Small ribosomal subunit protein uS17 from Synechococcus sp. (strain RCC307).